The sequence spans 375 residues: UDP-N-acetylglucosamine--N-acetylmuramyl-(pentapeptide) pyrophosphoryl-undecaprenol N-acetylglucosamine transferase (375 aa).

Residues 13 to 15, N124, R165, S193, and Q294 each bind UDP-N-acetyl-alpha-D-glucosamine; that span reads TGG.

This sequence belongs to the glycosyltransferase 28 family. MurG subfamily.

It localises to the cell inner membrane. The catalysed reaction is di-trans,octa-cis-undecaprenyl diphospho-N-acetyl-alpha-D-muramoyl-L-alanyl-D-glutamyl-meso-2,6-diaminopimeloyl-D-alanyl-D-alanine + UDP-N-acetyl-alpha-D-glucosamine = di-trans,octa-cis-undecaprenyl diphospho-[N-acetyl-alpha-D-glucosaminyl-(1-&gt;4)]-N-acetyl-alpha-D-muramoyl-L-alanyl-D-glutamyl-meso-2,6-diaminopimeloyl-D-alanyl-D-alanine + UDP + H(+). It functions in the pathway cell wall biogenesis; peptidoglycan biosynthesis. In terms of biological role, cell wall formation. Catalyzes the transfer of a GlcNAc subunit on undecaprenyl-pyrophosphoryl-MurNAc-pentapeptide (lipid intermediate I) to form undecaprenyl-pyrophosphoryl-MurNAc-(pentapeptide)GlcNAc (lipid intermediate II). The chain is UDP-N-acetylglucosamine--N-acetylmuramyl-(pentapeptide) pyrophosphoryl-undecaprenol N-acetylglucosamine transferase from Mesorhizobium japonicum (strain LMG 29417 / CECT 9101 / MAFF 303099) (Mesorhizobium loti (strain MAFF 303099)).